The sequence spans 218 residues: ETS domain-containing protein ets-7 (218 aa).

The ETS DNA-binding region spans 12 to 93 (QRLLNFLRGL…KGKDSRYCFL (82 aa)). Residues 131–161 (TSNFSLQSSPSSSSNSSSARTMSATSSPTSS) are compositionally biased toward low complexity. The tract at residues 131 to 162 (TSNFSLQSSPSSSSNSSSARTMSATSSPTSSL) is disordered.

The protein belongs to the ETS family.

Its subcellular location is the nucleus. Its function is as follows. Probable transcription factor. Involved in responses to oxidative stress. In Caenorhabditis elegans, this protein is ETS domain-containing protein ets-7.